The sequence spans 159 residues: Large ribosomal subunit protein uL11 (159 aa).

It belongs to the universal ribosomal protein uL11 family. In terms of assembly, part of the ribosomal stalk of the 50S ribosomal subunit. Interacts with L10 and the large rRNA to form the base of the stalk. L10 forms an elongated spine to which L12 dimers bind in a sequential fashion forming a multimeric L10(L12)X complex.

Functionally, forms part of the ribosomal stalk which helps the ribosome interact with GTP-bound translation factors. The protein is Large ribosomal subunit protein uL11 of Methanococcus maripaludis (strain DSM 14266 / JCM 13030 / NBRC 101832 / S2 / LL).